Here is a 462-residue protein sequence, read N- to C-terminus: Elongation factor 1-alpha (462 aa).

A N,N,N-trimethylglycine modification is found at G2. Residue K3 is modified to N6,N6-dimethyllysine; alternate. An N6-methyllysine; alternate modification is found at K3. One can recognise a tr-type G domain in the interval 5 to 242; it reads KAHVNVVVIG…DAIEPPVRPS (238 aa). The segment at 14–21 is G1; the sequence is GHVDSGKS. 14–21 provides a ligand contact to GTP; that stretch reads GHVDSGKS. K30 carries the post-translational modification N6-methyllysine. Residues 70–74 form a G2 region; it reads GITID. K79 carries the post-translational modification N6,N6,N6-trimethyllysine. Residues 91–94 are G3; sequence DAPG. GTP contacts are provided by residues 91–95 and 153–156; these read DAPGH and NKMD. The G4 stretch occupies residues 153–156; it reads NKMD. The G5 stretch occupies residues 192 to 194; the sequence is SGW. N6,N6-dimethyllysine; alternate is present on K318. Residue K318 is modified to N6-methyllysine; alternate. N6-methyllysine is present on K392.

This sequence belongs to the TRAFAC class translation factor GTPase superfamily. Classic translation factor GTPase family. EF-Tu/EF-1A subfamily.

The protein resides in the cytoplasm. Functionally, this protein promotes the GTP-dependent binding of aminoacyl-tRNA to the A-site of ribosomes during protein biosynthesis. This Serendipita indica (Root endophyte fungus) protein is Elongation factor 1-alpha (TEF1).